The chain runs to 131 residues: Snaclec bitiscetin subunit alpha (131 aa).

3 disulfide bridges follow: cysteine 4/cysteine 15, cysteine 32/cysteine 125, and cysteine 100/cysteine 117. In terms of domain architecture, C-type lectin spans 11-126 (YKGHCYKVFK…CGEKNPFICK (116 aa)).

This sequence belongs to the snaclec family. In terms of assembly, heterodimer of subunits alpha and beta; disulfide-linked. As to expression, expressed by the venom gland.

It is found in the secreted. Its function is as follows. Snaclec that binds to von Willebrand factor (VWF) and induces its interaction with GPIbalpha (GP1BA) (via the vWF A1 domain), resulting in platelet aggregation. This Bitis arietans (African puff adder) protein is Snaclec bitiscetin subunit alpha.